A 536-amino-acid polypeptide reads, in one-letter code: Apolipoprotein N-acyltransferase (536 aa).

The next 7 helical transmembrane spans lie at 10 to 30, 42 to 62, 76 to 96, 107 to 127, 136 to 158, 181 to 201, and 212 to 232; these read IASGIILAWGWKRAVIALLAG, AWPVLFITFPIAVWLIDGSAA, WWFGFGYFVPGLYWIGYAFLV, AAICGLPAYLALFTALGFALA, LRILSLAVSLTISEWLRGHLLTG, IGIWGLTLLTVAIFASPAVLI, and AVPAMALGVLAAMTVFGGIRL. The region spanning 248 to 501 is the CN hydrolase domain; sequence MQPNLPQDAR…EGVLDSGLPA (254 aa). The Proton acceptor role is filled by glutamate 295. Lysine 360 is a catalytic residue. Residue cysteine 413 is the Nucleophile of the active site. The helical transmembrane segment at 509–529 threads the bilayer; that stretch reads ARVGELPAAVLVALVMMLVLL.

It belongs to the CN hydrolase family. Apolipoprotein N-acyltransferase subfamily.

The protein localises to the cell inner membrane. The enzyme catalyses N-terminal S-1,2-diacyl-sn-glyceryl-L-cysteinyl-[lipoprotein] + a glycerophospholipid = N-acyl-S-1,2-diacyl-sn-glyceryl-L-cysteinyl-[lipoprotein] + a 2-acyl-sn-glycero-3-phospholipid + H(+). Its pathway is protein modification; lipoprotein biosynthesis (N-acyl transfer). Catalyzes the phospholipid dependent N-acylation of the N-terminal cysteine of apolipoprotein, the last step in lipoprotein maturation. The chain is Apolipoprotein N-acyltransferase from Rhodopseudomonas palustris (strain ATCC BAA-98 / CGA009).